A 121-amino-acid polypeptide reads, in one-letter code: Spermidine export protein MdtJ (121 aa).

Helical transmembrane passes span methionine 1–serine 21, glycine 32–valine 52, isoleucine 55–phenylalanine 75, and glutamate 82–isoleucine 102.

This sequence belongs to the drug/metabolite transporter (DMT) superfamily. Small multidrug resistance (SMR) (TC 2.A.7.1) family. MdtJ subfamily. As to quaternary structure, forms a complex with MdtI.

Its subcellular location is the cell inner membrane. Functionally, catalyzes the excretion of spermidine. The protein is Spermidine export protein MdtJ of Escherichia coli O127:H6 (strain E2348/69 / EPEC).